A 55-amino-acid chain; its full sequence is Accessory gland-specific peptide 70A (55 aa).

A signal peptide spans 1-19; sequence MKTLALFLVLVCVLGLVQS. The tract at residues 20–33 is essential for binding to sperm; the sequence is WEWPWNRKPTKFPI. P28 and P32 each carry hydroxyproline. I33 is subject to Isoleucine derivative. 3 positions are modified to hydroxyproline: P34, P36, and P38. Positions 36–55 are sufficient to induce PMR; that stretch reads PNPRDKWCRLNLGPAWGGRC. The cysteines at positions 43 and 55 are disulfide-linked.

This sequence belongs to the Drosophila sex peptide family. In terms of processing, sperm-bound protein is cleaved to release an active C-terminal peptide. Gradual release from stored sperm may function to prolong PMR and enhance male reproductive success. In terms of tissue distribution, main cells of the accessory glands of males (paragonial gland).

Its subcellular location is the secreted. Functionally, male seminal protein which triggers short- and long-term post-mating behavioral responses (PMR) in female Drosophila. Binds initially to sperm where it is later cleaved to release an active peptide within the female reproductive tract. Signals via the sex peptide receptor (SPR) in female flies; may also act via other receptors. Moderates the activity of distinct neuronal circuitries in the female genital tract to promote specific PMRs including: enhanced ovulation, increased egg laying rate, increased feeding/foraging rate, induced antimicrobial peptide synthesis, reduced mating receptivity, reduced day-time sleep and reduced lifespan in multiple mated females. This Drosophila melanogaster (Fruit fly) protein is Accessory gland-specific peptide 70A (SP).